Here is a 421-residue protein sequence, read N- to C-terminus: Serine--tRNA ligase (421 aa).

L-serine is bound at residue 230 to 232 (TAE). 259–261 (RRE) provides a ligand contact to ATP. Glu282 lines the L-serine pocket. Position 346–349 (346–349 (EISS)) interacts with ATP. An L-serine-binding site is contributed by Ser381.

It belongs to the class-II aminoacyl-tRNA synthetase family. Type-1 seryl-tRNA synthetase subfamily. In terms of assembly, homodimer. The tRNA molecule binds across the dimer.

It localises to the cytoplasm. It catalyses the reaction tRNA(Ser) + L-serine + ATP = L-seryl-tRNA(Ser) + AMP + diphosphate + H(+). The catalysed reaction is tRNA(Sec) + L-serine + ATP = L-seryl-tRNA(Sec) + AMP + diphosphate + H(+). The protein operates within aminoacyl-tRNA biosynthesis; selenocysteinyl-tRNA(Sec) biosynthesis; L-seryl-tRNA(Sec) from L-serine and tRNA(Sec): step 1/1. In terms of biological role, catalyzes the attachment of serine to tRNA(Ser). Is also able to aminoacylate tRNA(Sec) with serine, to form the misacylated tRNA L-seryl-tRNA(Sec), which will be further converted into selenocysteinyl-tRNA(Sec). The polypeptide is Serine--tRNA ligase (Acidithiobacillus ferrooxidans (strain ATCC 23270 / DSM 14882 / CIP 104768 / NCIMB 8455) (Ferrobacillus ferrooxidans (strain ATCC 23270))).